We begin with the raw amino-acid sequence, 90 residues long: Small ribosomal subunit protein bS16 (90 aa).

This sequence belongs to the bacterial ribosomal protein bS16 family.

The sequence is that of Small ribosomal subunit protein bS16 from Streptococcus equi subsp. zooepidemicus (strain H70).